The chain runs to 111 residues: DIVLTQSPASLAVSLGQRATISCRASKSVSTSGYSYMHWYQQKPGQPPKLLIYLASNLESGVPARFSGSGSGTDFTLNIHPVEEEDAATYYCQHSRELPRTFGGGTKLEIK.

The tract at residues 1 to 23 (DIVLTQSPASLAVSLGQRATISC) is framework-1. The cysteines at positions 23 and 92 are disulfide-linked. Residues 24-38 (RASKSVSTSGYSYMH) are complementarity-determining-1. The segment at 39-53 (WYQQKPGQPPKLLIY) is framework-2. Residues 54-60 (LASNLES) form a complementarity-determining-2 region. The interval 61-92 (GVPARFSGSGSGTDFTLNIHPVEEEDAATYYC) is framework-3. Residues 93–101 (QHSRELPRT) are complementarity-determining-3. A framework-4 region spans residues 102-111 (FGGGTKLEIK).

The polypeptide is Ig kappa chain V-III region PC 6684 (Mus musculus (Mouse)).